The following is a 233-amino-acid chain: Uracil-DNA glycosylase (233 aa).

The Proton acceptor role is filled by D70.

It belongs to the uracil-DNA glycosylase (UDG) superfamily. UNG family.

Its subcellular location is the cytoplasm. The catalysed reaction is Hydrolyzes single-stranded DNA or mismatched double-stranded DNA and polynucleotides, releasing free uracil.. Its function is as follows. Excises uracil residues from the DNA which can arise as a result of misincorporation of dUMP residues by DNA polymerase or due to deamination of cytosine. This is Uracil-DNA glycosylase from Helicobacter acinonychis (strain Sheeba).